The chain runs to 974 residues: Kinase-interacting protein 1 (974 aa).

The NAB domain occupies 10–90 (YSWWAASHIR…ERYDHLSKEL (81 aa)). A disordered region spans residues 151 to 170 (STASKQKQGKQSSKIEDAAK). A coiled-coil region spans residues 173 to 423 (LSKNEAIEEI…DVVNQNSCLR (251 aa)). Residues 586 to 614 (AQPTPAEKGDEKVSAQSGNTSVYETHTQK) form a disordered region. Polar residues predominate over residues 599-610 (SAQSGNTSVYET). Positions 641–697 (NEYTAILKNYKEVTKKLSDIEKKDRDTEFELTLQTRELKSAIAKRDEEIHNLRQKLS) form a coiled coil. The tract at residues 714–740 (LLDPSDPSSARGLKPEDLPQIKDGDDE) is disordered. Positions 726 to 736 (LKPEDLPQIKD) are enriched in basic and acidic residues. Coiled coils occupy residues 784–807 (HQIQ…RDKE) and 882–905 (AAKF…ELEA).

As to quaternary structure, homodimer or homooligomer. Interacts with PRK1. Phosphorylated by PRK1. As to expression, expressed in mature pollen grains and pollen tubes, but not in style, ovary, petal, leaf, root or sepal.

The protein localises to the cytoplasm. Probably involved in the receptor-like kinase-mediated signal transduction pathway. In Petunia integrifolia (Violet-flowered petunia), this protein is Kinase-interacting protein 1.